The chain runs to 494 residues: MFQVQKELASHEAVVVALFEEEKTSSFVQELDKAFEGQLQVLLEEKELSTKKKAISKVHSLGKTDVKRYYFVGLGKKESYTTETLRSALGKTFKTLQAAKVQDAAILLDSFVTEKLDAIDVAHIAAEVQGLGTYELQTYKSDKKDRVELEKFTAITAEDAQEIEAALTVGYVHGRATNSARTLVNMPPNVLTATKLAEYAVELAEKYDMDYKVLEKEEMEELGMGALLAVNQGSIEPPKMIALIYKGKEEWTDVIGFVGKGITYDTGGYSLKPREGMVGMKGDMGGAAAVLGAMEIIGELRPEQNVIAVIPSTDNVVSGTAFKPDDVITSMSGKTIEVLNTDAEGRLALADGITYAKKLGANYLIDVATLTGGVIVALGNHTTGAMTNNEELFEQVLEASMETDESIWQLPIFDRDKERVRNSKFADLNNSPGREGHAVMAGTFIGEFAEDTPWVHLDIAGTSESSGAHDLGPAGATGAMVRTLATLVERFGEE.

Positions 260 and 265 each coordinate Mn(2+). Lys-272 is a catalytic residue. Residues Asp-283, Asp-342, and Glu-344 each contribute to the Mn(2+) site. Residue Arg-346 is part of the active site.

The protein belongs to the peptidase M17 family. Mn(2+) is required as a cofactor.

It is found in the cytoplasm. It carries out the reaction Release of an N-terminal amino acid, Xaa-|-Yaa-, in which Xaa is preferably Leu, but may be other amino acids including Pro although not Arg or Lys, and Yaa may be Pro. Amino acid amides and methyl esters are also readily hydrolyzed, but rates on arylamides are exceedingly low.. The enzyme catalyses Release of an N-terminal amino acid, preferentially leucine, but not glutamic or aspartic acids.. Presumably involved in the processing and regular turnover of intracellular proteins. Catalyzes the removal of unsubstituted N-terminal amino acids from various peptides. This chain is Probable cytosol aminopeptidase, found in Bacillus thuringiensis subsp. konkukian (strain 97-27).